The sequence spans 265 residues: Putative cysteine-rich receptor-like protein kinase At4g11521 (265 aa).

The first 23 residues, 1 to 23 (MMLNTLFLPIFLFFLITFDYVST), serve as a signal peptide directing secretion. 2 Gnk2-homologous domains span residues 24 to 122 (QTCF…NISF) and 128 to 241 (MEPS…LYPF). N-linked (GlcNAc...) asparagine glycosylation is found at Asn-34, Asn-102, and Asn-119. Asn-247 is a glycosylation site (N-linked (GlcNAc...) asparagine).

This sequence belongs to the protein kinase superfamily. Ser/Thr protein kinase family. CRK subfamily.

It localises to the secreted. This is Putative cysteine-rich receptor-like protein kinase At4g11521 from Arabidopsis thaliana (Mouse-ear cress).